Here is a 256-residue protein sequence, read N- to C-terminus: Thiazole synthase (256 aa).

The active-site Schiff-base intermediate with DXP is the lysine 96. Residues glycine 157, 184–185 (AG), and 206–207 (NT) contribute to the 1-deoxy-D-xylulose 5-phosphate site.

Belongs to the ThiG family. Homotetramer. Forms heterodimers with either ThiH or ThiS.

Its subcellular location is the cytoplasm. The catalysed reaction is [ThiS sulfur-carrier protein]-C-terminal-Gly-aminoethanethioate + 2-iminoacetate + 1-deoxy-D-xylulose 5-phosphate = [ThiS sulfur-carrier protein]-C-terminal Gly-Gly + 2-[(2R,5Z)-2-carboxy-4-methylthiazol-5(2H)-ylidene]ethyl phosphate + 2 H2O + H(+). It functions in the pathway cofactor biosynthesis; thiamine diphosphate biosynthesis. Functionally, catalyzes the rearrangement of 1-deoxy-D-xylulose 5-phosphate (DXP) to produce the thiazole phosphate moiety of thiamine. Sulfur is provided by the thiocarboxylate moiety of the carrier protein ThiS. In vitro, sulfur can be provided by H(2)S. This chain is Thiazole synthase, found in Brucella melitensis biotype 2 (strain ATCC 23457).